The primary structure comprises 276 residues: Ribosomal RNA small subunit methyltransferase A (276 aa).

Residues Asn27, Leu29, Gly54, Glu75, Asp101, and Asn123 each coordinate S-adenosyl-L-methionine.

The protein belongs to the class I-like SAM-binding methyltransferase superfamily. rRNA adenine N(6)-methyltransferase family. RsmA subfamily.

Its subcellular location is the cytoplasm. The enzyme catalyses adenosine(1518)/adenosine(1519) in 16S rRNA + 4 S-adenosyl-L-methionine = N(6)-dimethyladenosine(1518)/N(6)-dimethyladenosine(1519) in 16S rRNA + 4 S-adenosyl-L-homocysteine + 4 H(+). In terms of biological role, specifically dimethylates two adjacent adenosines (A1518 and A1519) in the loop of a conserved hairpin near the 3'-end of 16S rRNA in the 30S particle. May play a critical role in biogenesis of 30S subunits. This Bartonella henselae (strain ATCC 49882 / DSM 28221 / CCUG 30454 / Houston 1) (Rochalimaea henselae) protein is Ribosomal RNA small subunit methyltransferase A.